The sequence spans 146 residues: Hemoglobin subunit beta (146 aa).

Val1 carries the N-acetylvaline modification. The Globin domain occupies 2 to 146; it reads HLTAEEKSAV…VANALAHKYH (145 aa). Thr12 bears the Phosphothreonine mark. Ser44 is modified (phosphoserine). Residue Lys59 is modified to N6-acetyllysine. His63 lines the heme b pocket. Residue Lys82 is modified to N6-acetyllysine. His92 provides a ligand contact to heme b. Cys93 bears the S-nitrosocysteine mark. Lys144 carries the N6-acetyllysine modification.

Belongs to the globin family. In terms of assembly, heterotetramer of two alpha chains and two beta chains. In terms of tissue distribution, red blood cells.

In terms of biological role, involved in oxygen transport from the lung to the various peripheral tissues. The chain is Hemoglobin subunit beta (HBB) from Meles meles (Eurasian badger).